A 234-amino-acid polypeptide reads, in one-letter code: Transcriptional regulatory protein WalR (234 aa).

A Response regulatory domain is found at 3–116 (KILIVDDEKP…ELQARVKALL (114 aa)). Asp-52 is modified (4-aspartylphosphate). A DNA-binding region (ompR/PhoB-type) is located at residues 133–232 (PQPIQIGDLE…RRGVGYYMRN (100 aa)).

As to quaternary structure, monomer. Homodimer. Post-translationally, phosphorylated by WalK; can also be dephosphorylated by WalK.

It is found in the cytoplasm. In terms of biological role, member of the two-component regulatory system WalK/WalR that regulates genes involved in cell wall metabolism. Binds to the promoter region of the transcription factor fabT gene in the fabTH-acp operon in vitro. Inhibits transcription of fabT, probably acting in an unphosphorylated form, thereby playing a role in the regulation of fatty acid biosynthesis. Essential for normal growth in vitro. Required for maintaining normal cellular morphology, acting, at least in part, by regulating peptidoglycan hydrolase pcsB. Involved in maintaining expression of WalRK regulon genes in exponentially growing cells. The protein is Transcriptional regulatory protein WalR of Streptococcus pneumoniae serotype 2 (strain D39 / NCTC 7466).